A 672-amino-acid chain; its full sequence is Threonine--tRNA ligase (672 aa).

The region spanning 2–60 (SEPKNILLTVDGELREVTHGTTGLDLFREKPTTAVMRVDGLLWDLAREIPAGASVESVD) is the TGS domain. Positions 260–567 (DHRKLGAELD…LTEHYAGAFP (308 aa)) are catalytic. Cysteine 366, histidine 417, and histidine 544 together coordinate Zn(2+).

The protein belongs to the class-II aminoacyl-tRNA synthetase family. Homodimer. The cofactor is Zn(2+).

The protein resides in the cytoplasm. It catalyses the reaction tRNA(Thr) + L-threonine + ATP = L-threonyl-tRNA(Thr) + AMP + diphosphate + H(+). Catalyzes the attachment of threonine to tRNA(Thr) in a two-step reaction: L-threonine is first activated by ATP to form Thr-AMP and then transferred to the acceptor end of tRNA(Thr). Also edits incorrectly charged L-seryl-tRNA(Thr). The protein is Threonine--tRNA ligase of Micrococcus luteus (strain ATCC 4698 / DSM 20030 / JCM 1464 / CCM 169 / CCUG 5858 / IAM 1056 / NBRC 3333 / NCIMB 9278 / NCTC 2665 / VKM Ac-2230) (Micrococcus lysodeikticus).